A 113-amino-acid polypeptide reads, in one-letter code: MTPGVVHASPPQSQRVPRQAPCEWAIRNIGQKPKEPNCHNCGTHIGLRSKTLRGTPNYLPIRQDTHPPSVIFCLAGVGVPGGTCRPAPCVPRFAALPWATNHPGPGCLSDLRA.

As to expression, expressed in fetal and adult liver.

In Homo sapiens (Human), this protein is Putative insulin-like growth factor 2-associated protein.